A 463-amino-acid polypeptide reads, in one-letter code: ATP-dependent protease ATPase subunit HslU (463 aa).

ATP-binding positions include Ile-19 and 61–66; that span reads GVGKTE. The disordered stretch occupies residues 154 to 174; sequence FGGAQNSSQTSDTQEDGEIEK. Residues Asp-277, Glu-341, and Arg-413 each coordinate ATP.

This sequence belongs to the ClpX chaperone family. HslU subfamily. A double ring-shaped homohexamer of HslV is capped on each side by a ring-shaped HslU homohexamer. The assembly of the HslU/HslV complex is dependent on binding of ATP.

The protein localises to the cytoplasm. Its function is as follows. ATPase subunit of a proteasome-like degradation complex; this subunit has chaperone activity. The binding of ATP and its subsequent hydrolysis by HslU are essential for unfolding of protein substrates subsequently hydrolyzed by HslV. HslU recognizes the N-terminal part of its protein substrates and unfolds these before they are guided to HslV for hydrolysis. This is ATP-dependent protease ATPase subunit HslU from Bacillus cereus (strain G9842).